Reading from the N-terminus, the 386-residue chain is Succinate--CoA ligase [ADP-forming] subunit beta (386 aa).

In terms of domain architecture, ATP-grasp spans 9–244 (KEILKQYGVK…LDEEDEKEIE (236 aa)). Residues lysine 46, 53-55 (GRG), glutamate 99, cysteine 102, and glutamate 107 contribute to the ATP site. 2 residues coordinate Mg(2+): asparagine 199 and aspartate 213. Substrate is bound by residues asparagine 264 and 321–323 (GIM).

The protein belongs to the succinate/malate CoA ligase beta subunit family. As to quaternary structure, heterotetramer of two alpha and two beta subunits. It depends on Mg(2+) as a cofactor.

It catalyses the reaction succinate + ATP + CoA = succinyl-CoA + ADP + phosphate. It carries out the reaction GTP + succinate + CoA = succinyl-CoA + GDP + phosphate. It participates in carbohydrate metabolism; tricarboxylic acid cycle; succinate from succinyl-CoA (ligase route): step 1/1. In terms of biological role, succinyl-CoA synthetase functions in the citric acid cycle (TCA), coupling the hydrolysis of succinyl-CoA to the synthesis of either ATP or GTP and thus represents the only step of substrate-level phosphorylation in the TCA. The beta subunit provides nucleotide specificity of the enzyme and binds the substrate succinate, while the binding sites for coenzyme A and phosphate are found in the alpha subunit. The chain is Succinate--CoA ligase [ADP-forming] subunit beta from Brevibacillus brevis (strain 47 / JCM 6285 / NBRC 100599).